The chain runs to 141 residues: Large-conductance mechanosensitive channel (141 aa).

Helical transmembrane passes span 16–36 (VIDL…VDSL) and 86–106 (GNFI…FLMV).

It belongs to the MscL family. As to quaternary structure, homopentamer.

It is found in the cell inner membrane. Its function is as follows. Channel that opens in response to stretch forces in the membrane lipid bilayer. May participate in the regulation of osmotic pressure changes within the cell. In Ralstonia nicotianae (strain ATCC BAA-1114 / GMI1000) (Ralstonia solanacearum), this protein is Large-conductance mechanosensitive channel.